The chain runs to 478 residues: Zinc finger protein 410 (478 aa).

Residues Asn-187–Pro-213 are disordered. 5 C2H2-type zinc fingers span residues Leu-219–His-243, Phe-249–His-273, Phe-279–His-303, Phe-309–His-333, and His-339–His-362. 20 residues coordinate Zn(2+): Cys-221, Cys-226, His-239, His-243, Cys-251, Cys-256, His-269, His-273, Cys-281, Cys-286, His-299, His-303, Cys-311, Cys-316, His-329, His-333, Cys-341, Cys-344, His-357, and His-361.

In terms of assembly, interacts with CDKN2A/p14ARF. Sumoylated. Sumoylation increases its half-life, possibly by blocking ubiquitin-mediated degradation. Post-translationally, O-glycosylated. O-GlcNAcylation may occur in response to increasing glucose levels and affect transcription factor activity. In terms of tissue distribution, widely expressed.

The protein resides in the nucleus. The protein localises to the chromosome. Transcription factor that binds to the sequence motif 5'-CATCCCATAATA-3', and is specifically required to silence expression of fetal hemoglobin in adult erythroid cells. Prevents expression of fetal hemoglobin genes HBG1 and HBG2 through CHD4: acts as a direct transcriptional activator of CHD4, a central component of the NuRD complex that represses transcription of fetal hemoglobin genes HBG1 and HBG2 in erythroid cells. May also activate transcription of matrix-remodeling genes such as MMP1 during fibroblast senescence. May activate transcription of the gap junction gene GJC1, perhaps in response to increasing glucose. However, recent studies suggest that ZNF410 is dedicated to regulate expression of a single gene: CHD4. The sequence is that of Zinc finger protein 410 from Homo sapiens (Human).